The primary structure comprises 398 residues: GVKTVLLLIVGVLGAYYVYTPLPDNIEEPWRLLWVNAHMKTLTNLALFAEYLGSNIFMNTVKFLTSFQEVPPTSDENVTVTETTFNNVPVRVYVPKRKSKTLRRGLFYIHGGGWCVGSAALSGYDLLSRRTADRLDVVVVSTNYRLAPEYHFPIQFEDVYDALKWFLRQDVLEKYGVDPERVGVSGDSAGGNLAAAVAQQLIKDPDVKIKLKTQSLIYPALQTLDMDLPSYRENAQFPILSKSFMVRLWSEYFTSDRSLEKAMLLNQHVPVESSHLFKFTNWSSLLPEKFKKGHVYNTPTYGSSELARKYPGFLDVRAAPLLADDAQLRGFPLTYVITCQYDVLRDDGVMYVTRLRNAGVQVTHNHIEDGFHGALSYNGFKTGYRVEKQYFEWLRENV.

Over 1–4 (GVKT) the chain is Cytoplasmic. The helical; Signal-anchor for type II membrane protein transmembrane segment at 5–22 (VLLLIVGVLGAYYVYTPL) threads the bilayer. At 23-398 (PDNIEEPWRL…QYFEWLRENV (376 aa)) the chain is on the lumenal side. A glycan (N-linked (GlcNAc...) asparagine) is linked at asparagine 77. The Involved in the stabilization of the negatively charged intermediate by the formation of the oxyanion hole motif lies at 110 to 112 (HGG). Cysteine 115 and cysteine 339 form a disulfide bridge. Serine 188 is a catalytic residue. N-linked (GlcNAc...) asparagine glycosylation is present at asparagine 281. Residues aspartate 342 and histidine 372 contribute to the active site.

Belongs to the 'GDXG' lipolytic enzyme family. In terms of processing, glycosylated.

It localises to the endoplasmic reticulum membrane. The protein resides in the microsome membrane. The enzyme catalyses a triacylglycerol + H2O = a diacylglycerol + a fatty acid + H(+). Its activity is regulated as follows. Inhibited by diisopropylphosphofluoridate (DFP). Its function is as follows. Displays cellular triglyceride lipase activity in liver, increases the levels of intracellular fatty acids derived from the hydrolysis of newly formed triglyceride stores and plays a role in very low-density lipoprotein assembly. Displays serine esterase activity in liver. Deacetylates a variety of arylacetamide substrates, including xenobiotic compounds and procarcinogens, converting them to the primary arylamide compounds and increasing their toxicity. The chain is Arylacetamide deacetylase from Oryctolagus cuniculus (Rabbit).